Here is a 338-residue protein sequence, read N- to C-terminus: 4-hydroxy-3-methylbut-2-enyl diphosphate reductase (338 aa).

Cysteine 21 contributes to the [4Fe-4S] cluster binding site. (2E)-4-hydroxy-3-methylbut-2-enyl diphosphate-binding residues include histidine 50 and histidine 83. Dimethylallyl diphosphate-binding residues include histidine 50 and histidine 83. Histidine 50 and histidine 83 together coordinate isopentenyl diphosphate. Cysteine 105 lines the [4Fe-4S] cluster pocket. Histidine 133 provides a ligand contact to (2E)-4-hydroxy-3-methylbut-2-enyl diphosphate. Residue histidine 133 participates in dimethylallyl diphosphate binding. Histidine 133 serves as a coordination point for isopentenyl diphosphate. Glutamate 135 acts as the Proton donor in catalysis. Threonine 173 provides a ligand contact to (2E)-4-hydroxy-3-methylbut-2-enyl diphosphate. Position 203 (cysteine 203) interacts with [4Fe-4S] cluster. 4 residues coordinate (2E)-4-hydroxy-3-methylbut-2-enyl diphosphate: serine 231, serine 232, asparagine 233, and serine 276. Dimethylallyl diphosphate contacts are provided by serine 231, serine 232, asparagine 233, and serine 276. 4 residues coordinate isopentenyl diphosphate: serine 231, serine 232, asparagine 233, and serine 276.

The protein belongs to the IspH family. Requires [4Fe-4S] cluster as cofactor.

The enzyme catalyses isopentenyl diphosphate + 2 oxidized [2Fe-2S]-[ferredoxin] + H2O = (2E)-4-hydroxy-3-methylbut-2-enyl diphosphate + 2 reduced [2Fe-2S]-[ferredoxin] + 2 H(+). The catalysed reaction is dimethylallyl diphosphate + 2 oxidized [2Fe-2S]-[ferredoxin] + H2O = (2E)-4-hydroxy-3-methylbut-2-enyl diphosphate + 2 reduced [2Fe-2S]-[ferredoxin] + 2 H(+). It functions in the pathway isoprenoid biosynthesis; dimethylallyl diphosphate biosynthesis; dimethylallyl diphosphate from (2E)-4-hydroxy-3-methylbutenyl diphosphate: step 1/1. Its pathway is isoprenoid biosynthesis; isopentenyl diphosphate biosynthesis via DXP pathway; isopentenyl diphosphate from 1-deoxy-D-xylulose 5-phosphate: step 6/6. Its function is as follows. Catalyzes the conversion of 1-hydroxy-2-methyl-2-(E)-butenyl 4-diphosphate (HMBPP) into a mixture of isopentenyl diphosphate (IPP) and dimethylallyl diphosphate (DMAPP). Acts in the terminal step of the DOXP/MEP pathway for isoprenoid precursor biosynthesis. The polypeptide is 4-hydroxy-3-methylbut-2-enyl diphosphate reductase (Streptomyces avermitilis (strain ATCC 31267 / DSM 46492 / JCM 5070 / NBRC 14893 / NCIMB 12804 / NRRL 8165 / MA-4680)).